The chain runs to 477 residues: 3-isopropylmalate dehydratase large subunit 1 (477 aa).

Residues cysteine 357, cysteine 417, and cysteine 420 each coordinate [4Fe-4S] cluster.

This sequence belongs to the aconitase/IPM isomerase family. LeuC type 1 subfamily. In terms of assembly, heterodimer of LeuC and LeuD. [4Fe-4S] cluster serves as cofactor.

The catalysed reaction is (2R,3S)-3-isopropylmalate = (2S)-2-isopropylmalate. It participates in amino-acid biosynthesis; L-leucine biosynthesis; L-leucine from 3-methyl-2-oxobutanoate: step 2/4. Its function is as follows. Catalyzes the isomerization between 2-isopropylmalate and 3-isopropylmalate, via the formation of 2-isopropylmaleate. The sequence is that of 3-isopropylmalate dehydratase large subunit 1 from Bradyrhizobium diazoefficiens (strain JCM 10833 / BCRC 13528 / IAM 13628 / NBRC 14792 / USDA 110).